The sequence spans 584 residues: MNATQEKLKVQLEQALVAAFGADFAGVDPILVSASNPKFGDYQANVALSLSKKLGKQPRAIAGAIVEKLDVSEICEPPEIAGPGFINLKLKTAYLEAQLNDIQADPRLGVPAAKTPKRENVDFSSPNIAKEMHVGHLRSTIIGDSIARILEFQGHDVLRLNHVGDWGTQFGMLIAYLREVYPDALTTANALDIGDLVSFYRKAKQRFDTDTAFQETARQEVVRLQAGAEDTLHAWKLLCEQSRREFQVIYELLDIKLTERGESFYNPLLSGIVEDLEKSGLLVENQGAKCVFLEGFTNREGEPLPLIVQKSDGGYNYATTDLASLRYRIQQDQAKRIIYVTDAGQGNHFAQFFQVARKAGWIPDDVELVHVPFGLVLGEDGKKFKTRSGDTVRLRDLLDEAVSHAHADLKTRLQKEERQETEEFINEVARVVGISAVKYADLSQNRTSNYIFSYDKMLDLKGNTAPYMLYVYARIHGISRKGDINFKELGNNAVLLQHETELALAKYLLQLDEVISSVEQDLLPNRLCEYLFELSQKFNQFYDRCSILQAEEPQRTSRLVLCDLTARTLKLGLSLLGIQVLERM.

Residues Pro-126 to His-136 carry the 'HIGH' region motif.

The protein belongs to the class-I aminoacyl-tRNA synthetase family. Monomer.

The protein resides in the cytoplasm. The enzyme catalyses tRNA(Arg) + L-arginine + ATP = L-arginyl-tRNA(Arg) + AMP + diphosphate. This chain is Arginine--tRNA ligase, found in Nostoc punctiforme (strain ATCC 29133 / PCC 73102).